Here is a 261-residue protein sequence, read N- to C-terminus: Ribosomal RNA small subunit methyltransferase A (261 aa).

S-adenosyl-L-methionine is bound by residues histidine 12, leucine 14, glycine 39, glutamate 60, aspartate 81, and asparagine 104.

The protein belongs to the class I-like SAM-binding methyltransferase superfamily. rRNA adenine N(6)-methyltransferase family. RsmA subfamily.

The protein resides in the cytoplasm. The enzyme catalyses adenosine(1518)/adenosine(1519) in 16S rRNA + 4 S-adenosyl-L-methionine = N(6)-dimethyladenosine(1518)/N(6)-dimethyladenosine(1519) in 16S rRNA + 4 S-adenosyl-L-homocysteine + 4 H(+). In terms of biological role, specifically dimethylates two adjacent adenosines (A1518 and A1519) in the loop of a conserved hairpin near the 3'-end of 16S rRNA in the 30S particle. May play a critical role in biogenesis of 30S subunits. In Albidiferax ferrireducens (strain ATCC BAA-621 / DSM 15236 / T118) (Rhodoferax ferrireducens), this protein is Ribosomal RNA small subunit methyltransferase A.